Consider the following 333-residue polypeptide: Glycerol-3-phosphate dehydrogenase [NAD(P)+] (333 aa).

NADPH contacts are provided by serine 13, tryptophan 14, arginine 34, and lysine 108. Residues lysine 108, glycine 137, and serine 139 each coordinate sn-glycerol 3-phosphate. Position 141 (alanine 141) interacts with NADPH. The sn-glycerol 3-phosphate site is built by lysine 192, aspartate 245, serine 255, arginine 256, and asparagine 257. The active-site Proton acceptor is the lysine 192. Arginine 256 contributes to the NADPH binding site. Position 282 (glutamate 282) interacts with NADPH.

It belongs to the NAD-dependent glycerol-3-phosphate dehydrogenase family.

It localises to the cytoplasm. It carries out the reaction sn-glycerol 3-phosphate + NAD(+) = dihydroxyacetone phosphate + NADH + H(+). It catalyses the reaction sn-glycerol 3-phosphate + NADP(+) = dihydroxyacetone phosphate + NADPH + H(+). It participates in membrane lipid metabolism; glycerophospholipid metabolism. Functionally, catalyzes the reduction of the glycolytic intermediate dihydroxyacetone phosphate (DHAP) to sn-glycerol 3-phosphate (G3P), the key precursor for phospholipid synthesis. This Thioalkalivibrio sulfidiphilus (strain HL-EbGR7) protein is Glycerol-3-phosphate dehydrogenase [NAD(P)+].